A 376-amino-acid chain; its full sequence is Growth/differentiation factor 8 (376 aa).

A signal peptide spans M1–L24. A propeptide spanning residues N25–R267 is cleaved from the precursor. N72 carries N-linked (GlcNAc...) asparagine glycosylation. 4 disulfide bridges follow: C273–C283, C282–C341, C310–C373, and C314–C375.

The protein belongs to the TGF-beta family. In terms of assembly, homodimer; disulfide-linked. Interacts with WFIKKN2, leading to inhibit its activity. Interacts with FSTL3. In terms of processing, synthesized as large precursor molecule that undergoes proteolytic cleavage to generate an N-terminal propeptide and a disulfide linked C-terminal dimer, which is the biologically active molecule. The circulating form consists of a latent complex of the C-terminal dimer and other proteins, including its propeptide, which maintain the C-terminal dimer in a latent, inactive state. Ligand activation requires additional cleavage of the prodomain by a tolloid-like metalloproteinase. As to expression, expressed specifically in developing and adult skeletal muscle. Weak expression in adipose tissue.

It is found in the secreted. Its function is as follows. Acts specifically as a negative regulator of skeletal muscle growth. This Mus musculus (Mouse) protein is Growth/differentiation factor 8 (Mstn).